Consider the following 545-residue polypeptide: DNA-binding protein REPIN1 (545 aa).

Positions Met-1 to Lys-50 are disordered. Ser-27 carries the phosphoserine modification. At Lys-39 the chain carries N6-acetyllysine. The C2H2-type 1; atypical zinc-finger motif lies at His-52–Cys-74. 2 C2H2-type zinc fingers span residues Leu-80–His-102 and Phe-111–His-133. A C2H2-type 4; atypical zinc finger spans residues Ile-140–Cys-162. C2H2-type zinc fingers lie at residues Phe-172–His-194, Phe-229–His-251, His-257–His-279, Tyr-285–His-307, His-353–His-375, Phe-381–His-403, Phe-409–His-431, Phe-437–His-459, Tyr-465–His-487, Tyr-493–His-515, and Phe-521–His-543. Lys-269 carries the post-translational modification N6-acetyllysine.

Homodimers and homomultimers. Found in a complex with RIP60 and RIP100.

Its subcellular location is the nucleus. It is found in the cytoplasm. It localises to the cytosol. Sequence-specific double-stranded DNA-binding protein. Binds ATT-rich and T-rich DNA sequences and facilitates DNA bending. May regulate the expression of genes involved in cellular fatty acid import, including SCARB1/CD36, and genes involved in lipid droplet formation. May regulate the expression of LCN2, and thereby influence iron metabolism and apoptosis-related pathways. May regulate the expression of genes involved in glucose transport. This is DNA-binding protein REPIN1 (Repin1) from Mus musculus (Mouse).